The sequence spans 447 residues: Cysteine--tRNA ligase (447 aa).

Residue Cys28 participates in Zn(2+) binding. Positions 30–40 match the 'HIGH' region motif; sequence PTVYNYIHIGN. Residues Cys211, His236, and Glu240 each contribute to the Zn(2+) site. Residues 268-272 carry the 'KMSKS' region motif; that stretch reads KMSKS. Lys271 provides a ligand contact to ATP.

Belongs to the class-I aminoacyl-tRNA synthetase family. In terms of assembly, monomer. Zn(2+) is required as a cofactor.

The protein resides in the cytoplasm. The enzyme catalyses tRNA(Cys) + L-cysteine + ATP = L-cysteinyl-tRNA(Cys) + AMP + diphosphate. This chain is Cysteine--tRNA ligase, found in Streptococcus pyogenes serotype M28 (strain MGAS6180).